The chain runs to 266 residues: Amylovoran biosynthesis glycosyltransferase AmsE (266 aa).

It belongs to the glycosyltransferase 2 family.

The protein operates within glycan metabolism; exopolysaccharide biosynthesis. Involved in the biosynthesis of amylovoran which functions as a virulence factor. The chain is Amylovoran biosynthesis glycosyltransferase AmsE (amsE) from Erwinia amylovora (Fire blight bacteria).